Consider the following 547-residue polypeptide: Glucose-6-phosphate isomerase (547 aa).

Glutamate 350 acts as the Proton donor in catalysis. Catalysis depends on residues histidine 381 and lysine 510.

The protein belongs to the GPI family.

The protein localises to the cytoplasm. The catalysed reaction is alpha-D-glucose 6-phosphate = beta-D-fructose 6-phosphate. The protein operates within carbohydrate biosynthesis; gluconeogenesis. It participates in carbohydrate degradation; glycolysis; D-glyceraldehyde 3-phosphate and glycerone phosphate from D-glucose: step 2/4. In terms of biological role, catalyzes the reversible isomerization of glucose-6-phosphate to fructose-6-phosphate. This chain is Glucose-6-phosphate isomerase, found in Mesorhizobium japonicum (strain LMG 29417 / CECT 9101 / MAFF 303099) (Mesorhizobium loti (strain MAFF 303099)).